The following is a 609-amino-acid chain: Polyadenylate-binding protein 7 (609 aa).

RRM domains are found at residues 24 to 102 (ASLY…WSVR), 112 to 189 (GNVF…KFMK), 201 to 278 (TNLY…RAQK), and 304 to 381 (SNIY…IAQK). The PABC domain occupies 509–586 (EMKKSIQQRQ…AFEVLKSSKT (78 aa)).

This sequence belongs to the polyadenylate-binding protein type-1 family. In terms of tissue distribution, expressed predominantly in siliques.

Its subcellular location is the cytoplasm. It localises to the nucleus. Binds the poly(A) tail of mRNA. Appears to be an important mediator of the multiple roles of the poly(A) tail in mRNA biogenesis, stability and translation. This Arabidopsis thaliana (Mouse-ear cress) protein is Polyadenylate-binding protein 7 (PAB7).